Reading from the N-terminus, the 261-residue chain is Thioredoxin-like protein HCF164, chloroplastic (261 aa).

The N-terminal 40 residues, 1-40 (MARLVFSLNLPSSHGFNLSPRNLQSFFVTQTGAPRFRAVR), are a transit peptide targeting the chloroplast. The tract at residues 39–91 (VRCKPNPESSETKQEKLVIDNGETSSASKEVESSSSVADSSSSSSSGFPESPN) is disordered. The segment covering 63-84 (SSASKEVESSSSVADSSSSSSS) has biased composition (low complexity). The Thioredoxin domain maps to 101 to 229 (VTVIAALSLF…LVENVNALAA (129 aa)). Catalysis depends on nucleophile residues Cys-150 and Cys-153. Residues Cys-150 and Cys-153 are joined by a disulfide bond.

The protein belongs to the thioredoxin family. As to quaternary structure, interacts in vitro with LTO1.

Its subcellular location is the plastid. It is found in the chloroplast thylakoid membrane. Its function is as follows. Thiol-disulfide oxidoreductase that participates in various redox reactions in the chloroplast. Mediates the reduction of PSI-N in the thylakoid lumen. May interact and probably reduce other target proteins of the thylakoid membrane, such as FTSH2, FTSH8, LHCB5, atpA, atpB, atpE, petA and petC. Involved in the biogenesis of the plastid cytochrome b6f complex. Reducing equivalents are provided by stromal M-type thioredoxins and probably transduced through the thylakoid membrane by CCDA. Possesses low insulin disulfide bonds reducing activity. The polypeptide is Thioredoxin-like protein HCF164, chloroplastic (Arabidopsis thaliana (Mouse-ear cress)).